We begin with the raw amino-acid sequence, 181 residues long: UPF0301 protein MXAN_2022 (181 aa).

Belongs to the UPF0301 (AlgH) family.

This Myxococcus xanthus (strain DK1622) protein is UPF0301 protein MXAN_2022.